A 132-amino-acid polypeptide reads, in one-letter code: NADH-quinone oxidoreductase subunit A (132 aa).

Transmembrane regions (helical) follow at residues 7-27, 62-82, and 91-111; these read YWVLLVYTFVVIALVAGMIGV, FYLIAMFFVIFDLEAAYLYAW, and WTGYLVIAVFILALLAALAYL.

The protein belongs to the complex I subunit 3 family. In terms of assembly, NDH-1 is composed of 14 different subunits. Subunits NuoA, H, J, K, L, M, N constitute the membrane sector of the complex.

The protein localises to the cell inner membrane. It carries out the reaction a quinone + NADH + 5 H(+)(in) = a quinol + NAD(+) + 4 H(+)(out). Functionally, NDH-1 shuttles electrons from NADH, via FMN and iron-sulfur (Fe-S) centers, to quinones in the respiratory chain. The immediate electron acceptor for the enzyme in this species is believed to be ubiquinone. Couples the redox reaction to proton translocation (for every two electrons transferred, four hydrogen ions are translocated across the cytoplasmic membrane), and thus conserves the redox energy in a proton gradient. The sequence is that of NADH-quinone oxidoreductase subunit A from Acidiphilium cryptum (strain JF-5).